Reading from the N-terminus, the 465-residue chain is Glutamate--tRNA ligase 1 (465 aa).

The short motif at 8–18 (PSPTGLMHLGN) is the 'HIGH' region element. Residues 249 to 253 (PLSKR) carry the 'KMSKS' region motif. ATP is bound at residue Lys-252.

This sequence belongs to the class-I aminoacyl-tRNA synthetase family. Glutamate--tRNA ligase type 1 subfamily. Monomer.

Its subcellular location is the cytoplasm. It catalyses the reaction tRNA(Glu) + L-glutamate + ATP = L-glutamyl-tRNA(Glu) + AMP + diphosphate. Its function is as follows. Catalyzes the attachment of glutamate to tRNA(Glu) in a two-step reaction: glutamate is first activated by ATP to form Glu-AMP and then transferred to the acceptor end of tRNA(Glu). The polypeptide is Glutamate--tRNA ligase 1 (Coxiella burnetii (strain CbuG_Q212) (Coxiella burnetii (strain Q212))).